A 426-amino-acid chain; its full sequence is Serine--tRNA ligase (426 aa).

233–235 (TAE) lines the L-serine pocket. Residue 264 to 266 (RSE) participates in ATP binding. An L-serine-binding site is contributed by Glu287. Position 351–354 (351–354 (EISS)) interacts with ATP. Ser387 provides a ligand contact to L-serine.

This sequence belongs to the class-II aminoacyl-tRNA synthetase family. Type-1 seryl-tRNA synthetase subfamily. Homodimer. The tRNA molecule binds across the dimer.

The protein resides in the cytoplasm. It carries out the reaction tRNA(Ser) + L-serine + ATP = L-seryl-tRNA(Ser) + AMP + diphosphate + H(+). The catalysed reaction is tRNA(Sec) + L-serine + ATP = L-seryl-tRNA(Sec) + AMP + diphosphate + H(+). The protein operates within aminoacyl-tRNA biosynthesis; selenocysteinyl-tRNA(Sec) biosynthesis; L-seryl-tRNA(Sec) from L-serine and tRNA(Sec): step 1/1. In terms of biological role, catalyzes the attachment of serine to tRNA(Ser). Is also able to aminoacylate tRNA(Sec) with serine, to form the misacylated tRNA L-seryl-tRNA(Sec), which will be further converted into selenocysteinyl-tRNA(Sec). This Pseudomonas syringae pv. tomato (strain ATCC BAA-871 / DC3000) protein is Serine--tRNA ligase.